A 249-amino-acid polypeptide reads, in one-letter code: Anamorsin homolog (249 aa).

An N-terminal SAM-like domain region spans residues 1 to 130 (MEQFKDLQKS…ETGSAARLSF (130 aa)). Residues 131-161 (AKKAAGVNVWKISGDDEELIDEEDLLDEADK) are linker. Residues Cys-172, Cys-181, Cys-184, and Cys-186 each contribute to the [2Fe-2S] cluster site. A fe-S binding site A region spans residues 172–186 (CSTTGKRKACKNCSC). [4Fe-4S] cluster is bound by residues Cys-210, Cys-213, Cys-221, and Cys-224. 2 short sequence motifs (cx2C motif) span residues 210-213 (CGNC) and 221-224 (CSTC). A fe-S binding site B region spans residues 210-224 (CGNCYLGDAFRCSTC).

Belongs to the anamorsin family. Monomer. [2Fe-2S] cluster serves as cofactor. The cofactor is [4Fe-4S] cluster.

The protein resides in the cytoplasm. Its subcellular location is the mitochondrion intermembrane space. In terms of biological role, component of the cytosolic iron-sulfur (Fe-S) protein assembly (CIA) machinery. Required for the maturation of extramitochondrial Fe-S proteins. Part of an electron transfer chain functioning in an early step of cytosolic Fe-S biogenesis, facilitating the de novo assembly of a [4Fe-4S] cluster on the cytosolic Fe-S scaffold complex. Electrons are transferred from NADPH via a FAD- and FMN-containing diflavin oxidoreductase. Together with the diflavin oxidoreductase, also required for the assembly of the diferric tyrosyl radical cofactor of ribonucleotide reductase (RNR), probably by providing electrons for reduction during radical cofactor maturation in the catalytic small subunit. The polypeptide is Anamorsin homolog (Drosophila grimshawi (Hawaiian fruit fly)).